We begin with the raw amino-acid sequence, 262 residues long: Phenylalanine-4-hydroxylase (262 aa).

Residues His-121, His-126, and Glu-166 each contribute to the Fe cation site.

The protein belongs to the biopterin-dependent aromatic amino acid hydroxylase family. As to quaternary structure, monomer. Requires Fe(2+) as cofactor.

It catalyses the reaction (6R)-L-erythro-5,6,7,8-tetrahydrobiopterin + L-phenylalanine + O2 = (4aS,6R)-4a-hydroxy-L-erythro-5,6,7,8-tetrahydrobiopterin + L-tyrosine. It functions in the pathway amino-acid degradation; L-phenylalanine degradation; acetoacetate and fumarate from L-phenylalanine: step 1/6. This is Phenylalanine-4-hydroxylase (phhA) from Pseudomonas aeruginosa (strain ATCC 15692 / DSM 22644 / CIP 104116 / JCM 14847 / LMG 12228 / 1C / PRS 101 / PAO1).